The chain runs to 528 residues: Na(+)/H(+) antiporter NhaB (528 aa).

The Cytoplasmic portion of the chain corresponds to 1 to 23; the sequence is MPISLGNAFIKNFLGKAPDWYKV. The chain crosses the membrane as a helical span at residues 24-46; the sequence is AIIAFLIINPIVFFLINPFVAGW. Topologically, residues 47–95 are periplasmic; that stretch reads LLVAEFIFTLAMALKCYPLQPGGLLAIEAIAIGMTSPAQVKHELVANIE. Residues 96–118 traverse the membrane as a helical segment; it reads VLLLLVFMVAGIYFMKHLLLFIF. Topologically, residues 119–129 are cytoplasmic; it reads TKILLGIRSKT. The chain crosses the membrane as a helical span at residues 130-163; the sequence is LLSLAFCFAAAFLSAFLDALTVIAVVISVAIGFY. The Periplasmic portion of the chain corresponds to 164–239; it reads SIYHKVASGN…ADQAGWLFGE (76 aa). Residues 240-262 form a helical membrane-spanning segment; the sequence is FLIRMSPVTLPVFFCGLITCALV. The Cytoplasmic portion of the chain corresponds to 263–297; that stretch reads EKLKVFGYGAKLPNNVRQILVDFDNEERKTRTNQD. Residues 298-317 traverse the membrane as a helical segment; it reads VAKLWVQGLIAVWLIVALAL. The Periplasmic portion of the chain corresponds to 318-320; the sequence is HLA. A helical membrane pass occupies residues 321–340; the sequence is AVGLIGLSVIILATAFTGVI. The Cytoplasmic portion of the chain corresponds to 341 to 352; the sequence is EEHSMGKAFEEA. Residues 353–375 form a helical membrane-spanning segment; that stretch reads LPFTALLAVFFSIVAVIIDQELF. At 376–389 the chain is on the periplasmic side; that stretch reads KPVIDAVLAVEDKG. The chain crosses the membrane as a helical span at residues 390–412; sequence TQLALFYVANGLLSMVSDNVFVG. The Cytoplasmic portion of the chain corresponds to 413–477; that stretch reads TVYINEVKTA…PLIRLSYGRM (65 aa). The chain crosses the membrane as a helical span at residues 478-500; sequence VIMALPYTIVLAIVGLMGIMFFL. At 501 to 528 the chain is on the periplasmic side; it reads EPATASFYDAGWILPHSGDLTPVVSGGH.

It belongs to the NhaB Na(+)/H(+) (TC 2.A.34) antiporter family.

The protein resides in the cell inner membrane. It catalyses the reaction 2 Na(+)(in) + 3 H(+)(out) = 2 Na(+)(out) + 3 H(+)(in). Na(+)/H(+) antiporter that extrudes sodium in exchange for external protons. In Vibrio alginolyticus, this protein is Na(+)/H(+) antiporter NhaB.